The chain runs to 273 residues: Large ribosomal subunit protein uL2 (273 aa).

The interval 228–273 is disordered; sequence VDHPHGGGEGKTSGGRHPVTPWGFPTKGKKTRKNKRTSKFIVKKRK. Residues 254–273 show a composition bias toward basic residues; sequence KGKKTRKNKRTSKFIVKKRK.

The protein belongs to the universal ribosomal protein uL2 family. As to quaternary structure, part of the 50S ribosomal subunit. Forms a bridge to the 30S subunit in the 70S ribosome.

One of the primary rRNA binding proteins. Required for association of the 30S and 50S subunits to form the 70S ribosome, for tRNA binding and peptide bond formation. It has been suggested to have peptidyltransferase activity; this is somewhat controversial. Makes several contacts with the 16S rRNA in the 70S ribosome. This chain is Large ribosomal subunit protein uL2, found in Rickettsia massiliae (strain Mtu5).